The following is a 301-amino-acid chain: MKITRIYVRLMAISLSRKLIDYIKLSKPRVISLLDLAAIAGFVLGLPKAINITSIIVSFLAVIIGGSLASGGGMIINGGLEIEKDKKMKRTSWRPTVKGEVGRKEAYAIGSIFIVVGTLIGFLANPLTALFIALGAFIYVVIYSIWLKPRTWWNIVIGGFAGSAAAWAGFAASSGSFTLLSFLLGFLIFMWTPGHFWSLALRFRDDYKNAEIPMLPVLTDERTSAKAIAISNALMVPFALLIGLYAGLIYLIVSTIVSAFLLYVSVKLYLNPTADEAWESFKLSSPYLAIILLTLIIVKLI.

The next 8 membrane-spanning stretches (helical) occupy residues V30 to I50, I55 to I75, A106 to P126, L127 to L147, W152 to A172, F177 to W197, A233 to V253, and F281 to I301.

This sequence belongs to the UbiA prenyltransferase family. Protoheme IX farnesyltransferase subfamily.

Its subcellular location is the cell membrane. It carries out the reaction heme b + (2E,6E)-farnesyl diphosphate + H2O = Fe(II)-heme o + diphosphate. It functions in the pathway porphyrin-containing compound metabolism; heme O biosynthesis; heme O from protoheme: step 1/1. Functionally, converts heme B (protoheme IX) to heme O by substitution of the vinyl group on carbon 2 of heme B porphyrin ring with a hydroxyethyl farnesyl side group. This Sulfurisphaera tokodaii (strain DSM 16993 / JCM 10545 / NBRC 100140 / 7) (Sulfolobus tokodaii) protein is Protoheme IX farnesyltransferase.